Reading from the N-terminus, the 254-residue chain is Emerin (254 aa).

Met1 carries the post-translational modification N-acetylmethionine. The LEM domain maps to 1–45 (MDNYADLSDTELTTLLRRYNIPHGPVVGSTRRLYEKKIFEYETQR). Ser8 and Ser29 each carry phosphoserine. The interval 46-222 (RRLSPPSSSA…PGAGLGQDRQ (177 aa)) is interaction with F-actin. Phosphoserine; by PKA is present on Ser49. Phosphoserine is present on residues Ser54, Ser60, Ser87, Ser98, Ser141, Ser142, and Ser143. Tyr161 carries the phosphotyrosine modification. Residues 168 to 186 (RPVSASRSSLDLSYYPTSS) are interaction with CTNNB1. Phosphoserine is present on residues Ser171, Ser173, and Ser175. Residues 223–243 (VPLWGQLLLFLVFVIVLFFIY) form a helical membrane-spanning segment.

As to quaternary structure, interacts with lamins A and C, BANF1, GMCL, BCLAF1 and YTHDC1/YT521. Interacts with TMEM43; the interaction retains emerin in the nuclear inner membrane. Interacts with SUN1 and SUN2. Interacts with ACTB, SPTAN1, F-actin, CTNNB1 and beta-tubulin. Interacts with TMEM201. Interacts with NEMP1. Found in four different phosphorylated forms, three of which appear to be associated with the cell cycle. As to expression, skeletal muscle, heart, colon, testis, ovary and pancreas.

The protein resides in the nucleus inner membrane. The protein localises to the nucleus outer membrane. Functionally, stabilizes and promotes the formation of a nuclear actin cortical network. Stimulates actin polymerization in vitro by binding and stabilizing the pointed end of growing filaments. Inhibits beta-catenin activity by preventing its accumulation in the nucleus. Acts by influencing the nuclear accumulation of beta-catenin through a CRM1-dependent export pathway. Links centrosomes to the nuclear envelope via a microtubule association. Required for proper localization of non-farnesylated prelamin-A/C. Together with NEMP1, contributes to nuclear envelope stiffness in germ cells. EMD and BAF are cooperative cofactors of HIV-1 infection. Association of EMD with the viral DNA requires the presence of BAF and viral integrase. The association of viral DNA with chromatin requires the presence of BAF and EMD. The sequence is that of Emerin (EMD) from Homo sapiens (Human).